A 245-amino-acid polypeptide reads, in one-letter code: Orotidine 5'-phosphate decarboxylase (245 aa).

Substrate-binding positions include aspartate 22, lysine 44, 71-80, threonine 131, arginine 192, glutamine 201, glycine 221, and arginine 222; that span reads DLKFHDIPNT. The active-site Proton donor is lysine 73.

The protein belongs to the OMP decarboxylase family. Type 1 subfamily. In terms of assembly, homodimer.

It carries out the reaction orotidine 5'-phosphate + H(+) = UMP + CO2. It participates in pyrimidine metabolism; UMP biosynthesis via de novo pathway; UMP from orotate: step 2/2. Its function is as follows. Catalyzes the decarboxylation of orotidine 5'-monophosphate (OMP) to uridine 5'-monophosphate (UMP). The sequence is that of Orotidine 5'-phosphate decarboxylase from Shigella flexneri.